The primary structure comprises 159 residues: Ribosomal RNA large subunit methyltransferase H (159 aa).

S-adenosyl-L-methionine-binding positions include L76, G107, and 126–131 (LSKLTM).

It belongs to the RNA methyltransferase RlmH family. Homodimer.

Its subcellular location is the cytoplasm. The catalysed reaction is pseudouridine(1915) in 23S rRNA + S-adenosyl-L-methionine = N(3)-methylpseudouridine(1915) in 23S rRNA + S-adenosyl-L-homocysteine + H(+). Specifically methylates the pseudouridine at position 1915 (m3Psi1915) in 23S rRNA. The protein is Ribosomal RNA large subunit methyltransferase H of Acinetobacter baumannii (strain SDF).